Here is a 1341-residue protein sequence, read N- to C-terminus: DNA-directed RNA polymerase subunit Rpo1N (1341 aa).

Zn(2+) contacts are provided by Cys62, Cys65, Cys72, His75, Cys102, Cys105, Cys149, and Cys152. Residues Asp918, Asp920, and Asp922 each coordinate Mg(2+).

It belongs to the RNA polymerase beta' chain family. As to quaternary structure, part of the RNA polymerase complex. It depends on Mg(2+) as a cofactor. Zn(2+) is required as a cofactor. In terms of processing, this protein undergoes a protein self splicing that involves a post-translational excision of the intervening region (intein) followed by peptide ligation.

It localises to the cytoplasm. The catalysed reaction is RNA(n) + a ribonucleoside 5'-triphosphate = RNA(n+1) + diphosphate. In terms of biological role, DNA-dependent RNA polymerase (RNAP) catalyzes the transcription of DNA into RNA using the four ribonucleoside triphosphates as substrates. Forms the clamp head domain. The sequence is that of DNA-directed RNA polymerase subunit Rpo1N from Methanocaldococcus jannaschii (strain ATCC 43067 / DSM 2661 / JAL-1 / JCM 10045 / NBRC 100440) (Methanococcus jannaschii).